We begin with the raw amino-acid sequence, 262 residues long: Phosphatidylglycerol--prolipoprotein diacylglyceryl transferase (262 aa).

Transmembrane regions (helical) follow at residues 17–37, 57–77, 95–115, and 119–139; these read LAIH…YALG, LIFY…VLFY, GGMS…LFAH, and LGFF…LAAG. Residue Arg-140 participates in a 1,2-diacyl-sn-glycero-3-phospho-(1'-sn-glycerol) binding. 3 helical membrane-spanning segments follow: residues 173–193, 200–220, and 227–247; these read PSQL…LWWY, AGQV…LVEF, and FLGL…PMVL.

It belongs to the Lgt family.

It is found in the cell inner membrane. The enzyme catalyses L-cysteinyl-[prolipoprotein] + a 1,2-diacyl-sn-glycero-3-phospho-(1'-sn-glycerol) = an S-1,2-diacyl-sn-glyceryl-L-cysteinyl-[prolipoprotein] + sn-glycerol 1-phosphate + H(+). Its pathway is protein modification; lipoprotein biosynthesis (diacylglyceryl transfer). In terms of biological role, catalyzes the transfer of the diacylglyceryl group from phosphatidylglycerol to the sulfhydryl group of the N-terminal cysteine of a prolipoprotein, the first step in the formation of mature lipoproteins. The chain is Phosphatidylglycerol--prolipoprotein diacylglyceryl transferase from Bordetella bronchiseptica (strain ATCC BAA-588 / NCTC 13252 / RB50) (Alcaligenes bronchisepticus).